The chain runs to 1958 residues: Rho GTPase-activating protein 21 (1958 aa).

The segment at 1–42 is disordered; the sequence is MMATRRTGLSEGDGDKLKACEVSKNKDGKEQSETVSLSEDET. The span at 13–32 shows a compositional bias: basic and acidic residues; that stretch reads DGDKLKACEVSKNKDGKEQS. Phosphoserine occurs at positions 36 and 57. The region spanning 50-159 is the PDZ domain; sequence TVTLKRTSQG…TLELSVMPKD (110 aa). Composition is skewed to polar residues over residues 286–295, 306–325, and 418–436; these read SNRNNHTGPS, SEQTSLKTVSRTTSPPLSIP, and ASQSTTDYNQVVPNRTTLQ. Disordered regions lie at residues 286–325 and 418–458; these read SNRNNHTGPSHRTEEVRYGVSEQTSLKTVSRTTSPPLSIP and ASQS…QRSV. A compositionally biased stretch (low complexity) spans 448–458; it reads PQSVQIRQRSV. Residue serine 459 is modified to Phosphoserine. 2 positions are modified to omega-N-methylarginine: arginine 554 and arginine 575. Serine 612, serine 616, and serine 625 each carry phosphoserine. The span at 659–687 shows a compositional bias: polar residues; the sequence is SLLNQQTWVRTDSAPDQQVETGKSPSLSG. The tract at residues 659-751 is disordered; the sequence is SLLNQQTWVR…PSGRQTPQPL (93 aa). The residue at position 717 (serine 717) is a Phosphoserine. Residues 729–742 are compositionally biased toward basic and acidic residues; the sequence is LDNKEAVILREKPP. Threonine 747 bears the Phosphothreonine mark. 3 positions are modified to phosphoserine: serine 857, serine 862, and serine 881. The disordered stretch occupies residues 859 to 885; it reads DHESVGPPSLDAQPNSKTERSKSYDEG. Residues 875–885 show a composition bias toward basic and acidic residues; sequence KTERSKSYDEG. Residue tyrosine 882 is modified to Phosphotyrosine. Residues serine 924, serine 926, serine 954, serine 1099, and serine 1115 each carry the phosphoserine modification. The interval 930–1097 is interaction with ARF1 and ARF6; the sequence is SDAAKEGWLH…AKSEPKTQSP (168 aa). One can recognise a PH domain in the interval 931 to 1040; sequence DAAKEGWLHF…WIKTIQESSN (110 aa). Residues 1086–1133 form a disordered region; that stretch reads LGAKSEPKTQSPHSPKEESERKLLSKDDTSPPKDKGTWRKGIPSIMRK. Residues 1099-1122 are compositionally biased toward basic and acidic residues; that stretch reads SPKEESERKLLSKDDTSPPKDKGT. The 193-residue stretch at 1147-1339 folds into the Rho-GAP domain; sequence VRLDDCPPAH…TLIQHHDWFF (193 aa). 4 disordered regions span residues 1348–1401, 1418–1575, 1598–1642, and 1655–1686; these read LTTV…GSGK, SRKR…KHSE, SLDS…SEFP, and RGKLQEVTKSSRRNSEGSELSCTEGSLTSSLD. Residues 1349-1362 are compositionally biased toward polar residues; the sequence is TTVQEESTVDSQPV. A compositionally biased stretch (low complexity) spans 1383 to 1401; sequence SDSATSDSTKSKGSWGSGK. Serine 1418, serine 1432, and serine 1433 each carry phosphoserine. Composition is skewed to basic and acidic residues over residues 1441-1466 and 1477-1493; these read FFKKENVEQCHNDTKEESKKESETLG and NSTRKDPSTTKDEKISL. A Glycyl lysine isopeptide (Lys-Gly) (interchain with G-Cter in SUMO) cross-link involves residue lysine 1444. Position 1504 is a phosphoserine (serine 1504). At threonine 1516 the chain carries Phosphothreonine. Serine 1527 bears the Phosphoserine mark. Low complexity predominate over residues 1544–1559; that stretch reads SDSGTLLSTSSQASLA. The tract at residues 1592–1861 is interaction with CTNNA1; the sequence is SATYLTSLDS…WLARERLRTS (270 aa). Polar residues predominate over residues 1603 to 1612; sequence RLSPEVQSVA. Residues 1624–1634 are compositionally biased toward basic and acidic residues; it reads SELISEGRPVE. Serine 1669 carries the phosphoserine modification. A compositionally biased stretch (polar residues) spans 1671 to 1686; it reads GSELSCTEGSLTSSLD. The residue at position 1682 (threonine 1682) is a Phosphothreonine. Serine 1742 is subject to Phosphoserine. A disordered region spans residues 1860–1958; that stretch reads TSTSDLSRGE…GSKAEFHPCL (99 aa). Residues 1874 to 1909 are compositionally biased toward polar residues; the sequence is QTENPSTREIATTDTPLSLHCNTGSSSSTLASTNRP. Serine 1917 carries the post-translational modification Phosphoserine. Over residues 1918–1931 the composition is skewed to polar residues; the sequence is PDQINGESFQNVSK.

Interacts with GTP-bound ARF1 and ARF6. Interacts with CTNNA1. Post-translationally, sumoylated with SUMO2 and SUMO3 in proliferating lymphocytes. Widely expressed with higher expression in brain, heart, skeletal muscle and placenta.

It localises to the golgi apparatus membrane. The protein resides in the cell junction. It is found in the cytoplasmic vesicle membrane. The protein localises to the cytoplasm. Its subcellular location is the cytoskeleton. Its function is as follows. Functions as a GTPase-activating protein (GAP) for RHOA and CDC42. Downstream partner of ARF1 which may control Golgi apparatus structure and function. Also required for CTNNA1 recruitment to adherens junctions. The polypeptide is Rho GTPase-activating protein 21 (ARHGAP21) (Homo sapiens (Human)).